Consider the following 65-residue polypeptide: Large ribosomal subunit protein uL29 (65 aa).

Residues 30 to 49 (ERSSVAMGGAPSSPGKMRSI) are disordered.

The protein belongs to the universal ribosomal protein uL29 family.

The chain is Large ribosomal subunit protein uL29 from Picrophilus torridus (strain ATCC 700027 / DSM 9790 / JCM 10055 / NBRC 100828 / KAW 2/3).